A 46-amino-acid chain; its full sequence is Peroxidase 1 (46 aa).

Belongs to the peroxidase family. Classical plant (class III) peroxidase subfamily. The cofactor is heme b. Requires Ca(2+) as cofactor.

The protein localises to the secreted. The catalysed reaction is 2 a phenolic donor + H2O2 = 2 a phenolic radical donor + 2 H2O. Functionally, removal of H(2)O(2), oxidation of toxic reductants, biosynthesis and degradation of lignin, suberization, auxin catabolism, response to environmental stresses such as wounding, pathogen attack and oxidative stress. These functions might be dependent on each isozyme/isoform in each plant tissue. This Catharanthus roseus (Madagascar periwinkle) protein is Peroxidase 1.